The chain runs to 20 residues: Manganese peroxidase H5 (20 aa).

It belongs to the peroxidase family. Ligninase subfamily.

It localises to the secreted. The enzyme catalyses 2 Mn(2+) + H2O2 + 2 H(+) = 2 Mn(3+) + 2 H2O. Functionally, catalyzes the oxidation of Mn(2+) to Mn(3+). The latter, acting as a diffusible redox mediator, is capable of oxidizing a variety of lignin compounds. The protein is Manganese peroxidase H5 of Phanerodontia chrysosporium (White-rot fungus).